The sequence spans 174 residues: Protein GrpE (174 aa).

A disordered region spans residues 1-35; that stretch reads MAQDIKNEEVEEVQEEEVVETAEETTPEKSELDLA. A compositionally biased stretch (acidic residues) spans 9-25; sequence EVEEVQEEEVVETAEET. The span at 26–35 shows a compositional bias: basic and acidic residues; it reads TPEKSELDLA.

The protein belongs to the GrpE family. As to quaternary structure, homodimer.

The protein resides in the cytoplasm. Its function is as follows. Participates actively in the response to hyperosmotic and heat shock by preventing the aggregation of stress-denatured proteins, in association with DnaK and GrpE. It is the nucleotide exchange factor for DnaK and may function as a thermosensor. Unfolded proteins bind initially to DnaJ; upon interaction with the DnaJ-bound protein, DnaK hydrolyzes its bound ATP, resulting in the formation of a stable complex. GrpE releases ADP from DnaK; ATP binding to DnaK triggers the release of the substrate protein, thus completing the reaction cycle. Several rounds of ATP-dependent interactions between DnaJ, DnaK and GrpE are required for fully efficient folding. This chain is Protein GrpE, found in Streptococcus pneumoniae (strain ATCC BAA-255 / R6).